Here is a 190-residue protein sequence, read N- to C-terminus: Bifunctional D-Ala-D-Ala dipeptidase and D-Ala-D-Ala carboxypeptidase VanXYC (190 aa).

Mg(2+) is bound at residue glutamate 66. Positions 67, 88, 93, 95, and 102 each coordinate a dipeptide. Positions 95 and 102 each coordinate Cu(2+). Zn(2+)-binding residues include histidine 95 and aspartate 102. Glutamate 153 (catalytic acid/base residue) is an active-site residue. A dipeptide contacts are provided by tryptophan 155 and histidine 156. Histidine 156 provides a ligand contact to Cu(2+). Position 156 (histidine 156) interacts with Zn(2+).

This sequence belongs to the peptidase M15D family. Homodimer.

Its subcellular location is the cytoplasm. The enzyme catalyses D-alanyl-D-alanine + H2O = 2 D-alanine. The catalysed reaction is UDP-N-acetyl-alpha-D-muramoyl-L-alanyl-gamma-D-glutamyl-L-lysyl-D-alanyl-D-alanine + H2O = UDP-N-acetyl-alpha-D-muramoyl-L-alanyl-gamma-D-glutamyl-L-lysyl-D-alanine + D-alanine. In terms of biological role, bifunctional enzyme, exhibiting dipeptidase and carboxypeptidase activities. Catalyzes hydrolysis of the D-alanyl-D-alanine dipeptide. Cleaves the C-terminal D-alanine residue of UDP-muramyl-pentapeptide[Ala] (UDP-MurNAc-L-Ala-D-Glu-L-Lys-D-Ala-D-Ala). Shows no activity against the pentapeptide with a C-terminal D-serine residue. Together with VanC/VanC1 and VanT, required for vancomycin resistance in E.gallinarum strain BM4174. In Enterococcus gallinarum, this protein is Bifunctional D-Ala-D-Ala dipeptidase and D-Ala-D-Ala carboxypeptidase VanXYC.